We begin with the raw amino-acid sequence, 307 residues long: Ornithine carbamoyltransferase (307 aa).

Carbamoyl phosphate is bound by residues Ser54–Thr57, Gln81, Arg105, and His132–Gln135. Residues Asn163, Asp221, and Ser225–Met226 contribute to the L-ornithine site. Residues Cys261–Leu262 and Arg289 contribute to the carbamoyl phosphate site.

It belongs to the aspartate/ornithine carbamoyltransferase superfamily. OTCase family.

The protein resides in the cytoplasm. It carries out the reaction carbamoyl phosphate + L-ornithine = L-citrulline + phosphate + H(+). It participates in amino-acid biosynthesis; L-arginine biosynthesis; L-arginine from L-ornithine and carbamoyl phosphate: step 1/3. Reversibly catalyzes the transfer of the carbamoyl group from carbamoyl phosphate (CP) to the N(epsilon) atom of ornithine (ORN) to produce L-citrulline. In Chromobacterium violaceum (strain ATCC 12472 / DSM 30191 / JCM 1249 / CCUG 213 / NBRC 12614 / NCIMB 9131 / NCTC 9757 / MK), this protein is Ornithine carbamoyltransferase.